The sequence spans 263 residues: 3-deoxy-manno-octulosonate cytidylyltransferase (263 aa).

Belongs to the KdsB family.

It is found in the cytoplasm. It carries out the reaction 3-deoxy-alpha-D-manno-oct-2-ulosonate + CTP = CMP-3-deoxy-beta-D-manno-octulosonate + diphosphate. Its pathway is nucleotide-sugar biosynthesis; CMP-3-deoxy-D-manno-octulosonate biosynthesis; CMP-3-deoxy-D-manno-octulosonate from 3-deoxy-D-manno-octulosonate and CTP: step 1/1. It functions in the pathway bacterial outer membrane biogenesis; lipopolysaccharide biosynthesis. Activates KDO (a required 8-carbon sugar) for incorporation into bacterial lipopolysaccharide in Gram-negative bacteria. The protein is 3-deoxy-manno-octulosonate cytidylyltransferase of Burkholderia cenocepacia (strain HI2424).